The following is a 692-amino-acid chain: Elongation factor G (692 aa).

The tr-type G domain maps to 8–282; sequence ENTRNIGIMA…GVVDYLPSPV (275 aa). GTP-binding positions include 17-24, 81-85, and 135-138; these read AHIDAGKT, DTPGH, and NKMD.

It belongs to the TRAFAC class translation factor GTPase superfamily. Classic translation factor GTPase family. EF-G/EF-2 subfamily.

It is found in the cytoplasm. Functionally, catalyzes the GTP-dependent ribosomal translocation step during translation elongation. During this step, the ribosome changes from the pre-translocational (PRE) to the post-translocational (POST) state as the newly formed A-site-bound peptidyl-tRNA and P-site-bound deacylated tRNA move to the P and E sites, respectively. Catalyzes the coordinated movement of the two tRNA molecules, the mRNA and conformational changes in the ribosome. The sequence is that of Elongation factor G from Geobacillus sp. (strain WCH70).